A 110-amino-acid chain; its full sequence is MEIEKTNRMNALFEFYAALLTDKQMNYIELYYADDYSLAEIAEEFGVSRQAVYDNIKRTEKILEDYEMKLHMYSDYIVRSQIFDDIMEKYADDSYLQEQIAILSSIDNRD.

Belongs to the UPF0122 family.

Might take part in the signal recognition particle (SRP) pathway. This is inferred from the conservation of its genetic proximity to ftsY/ffh. May be a regulatory protein. The sequence is that of UPF0122 protein STER_0914 from Streptococcus thermophilus (strain ATCC BAA-491 / LMD-9).